A 140-amino-acid chain; its full sequence is Relaxin-3 (140 aa).

A signal peptide spans 1 to 26 (MAKRPLLLLLLAVWVLAGELWLRTEA). Cystine bridges form between Cys36-Cys127, Cys48-Cys140, and Cys126-Cys131. Residues 56–116 (SDMLAHEALG…RTPGALRGSR (61 aa)) constitute a propeptide, connecting peptide.

It belongs to the insulin family. Heterodimer of a B chain and an A chain linked by two disulfide bonds.

It is found in the secreted. Its function is as follows. May play a role in neuropeptide signaling processes. Ligand for LGR7, RXFP3 and RXFP4. This is Relaxin-3 (RLN3) from Sus scrofa (Pig).